Consider the following 257-residue polypeptide: Protein KlaA (257 aa).

Belongs to the kla operon, which is associated with cryptic tellurite resistance, and IncW plasmid fertility inhibition. This Escherichia coli protein is Protein KlaA (klaA).